The following is a 217-amino-acid chain: MILVLGVFKIEVEPMLKEMEVLEKGRLLKRYYQRGVVGRNEVVVSYGFIGKVEAALVTQAFLDRFNIDAVFLTGNAGGLEGVEVGDVVIGDSYVEYDFETALGDEGIIVSGSEDLEDKVIAYSNREIKTGLIASGDAFVTVKEKAEEIKRRTGALCVDMDSAAVAKVCYENEKKFLAIKTIVDICGRETEEEFRKNYERYGFLSNLILLDVLKKCVF.

The active-site Proton acceptor is the Glu-11. Substrate-binding positions include Gly-77, Val-139, and 159-160 (MD). Asp-183 serves as the catalytic Proton donor.

Belongs to the PNP/UDP phosphorylase family. MtnN subfamily.

The enzyme catalyses S-adenosyl-L-homocysteine + H2O = S-(5-deoxy-D-ribos-5-yl)-L-homocysteine + adenine. It carries out the reaction S-methyl-5'-thioadenosine + H2O = 5-(methylsulfanyl)-D-ribose + adenine. It catalyses the reaction 5'-deoxyadenosine + H2O = 5-deoxy-D-ribose + adenine. The protein operates within amino-acid biosynthesis; L-methionine biosynthesis via salvage pathway; S-methyl-5-thio-alpha-D-ribose 1-phosphate from S-methyl-5'-thioadenosine (hydrolase route): step 1/2. Functionally, catalyzes the irreversible cleavage of the glycosidic bond in both 5'-methylthioadenosine (MTA) and S-adenosylhomocysteine (SAH/AdoHcy) to adenine and the corresponding thioribose, 5'-methylthioribose and S-ribosylhomocysteine, respectively. Also cleaves 5'-deoxyadenosine, a toxic by-product of radical S-adenosylmethionine (SAM) enzymes, into 5-deoxyribose and adenine. In Thermotoga maritima (strain ATCC 43589 / DSM 3109 / JCM 10099 / NBRC 100826 / MSB8), this protein is 5'-methylthioadenosine/S-adenosylhomocysteine nucleosidase (mtnN).